A 105-amino-acid chain; its full sequence is MATTKIKKGDSVKVIAGKDKGKEGKVISVSNGKVLVEGVNTITKHSKASQANPKGGIIHQEAPIDASNVMYVQKGKTTRIGFTTVDGKNGQKKVRVAKATGDIID.

It belongs to the universal ribosomal protein uL24 family. Part of the 50S ribosomal subunit.

Functionally, one of two assembly initiator proteins, it binds directly to the 5'-end of the 23S rRNA, where it nucleates assembly of the 50S subunit. Its function is as follows. One of the proteins that surrounds the polypeptide exit tunnel on the outside of the subunit. This Lachnoclostridium phytofermentans (strain ATCC 700394 / DSM 18823 / ISDg) (Clostridium phytofermentans) protein is Large ribosomal subunit protein uL24.